The following is an 84-amino-acid chain: Beta-mammal Tt1g (84 aa).

A signal peptide spans 1–20; it reads MKGMILFISCILLIGIVVEC. Residues 21–82 form the LCN-type CS-alpha/beta domain; that stretch reads KEGYLMDHEG…VWERATNRCG (62 aa). Intrachain disulfides connect Cys-31–Cys-81, Cys-35–Cys-57, Cys-43–Cys-62, and Cys-47–Cys-64. Cys-81 carries the post-translational modification Cysteine amide.

The protein belongs to the long (4 C-C) scorpion toxin superfamily. Sodium channel inhibitor family. Beta subfamily. In terms of tissue distribution, expressed by the venom gland.

The protein resides in the secreted. Its function is as follows. Beta toxins modify sodium channel function in two ways: an excitatory effect (shifting the activation process to more negative potential) and/or a depressant effect (reducing the peak current). At concentration of 500 nM this toxin produces channel opening at more negative potentials in hNav1.2/SCN2A and hNav1.3/SCN3A, which shows the biggest effect. On the other hand the peak current is decreased in hNav1.4/SCN4A and hNav1.5/SCN5A channels, without apparent modification of the activation gate. This toxin is active against mammals. The protein is Beta-mammal Tt1g of Tityus trivittatus (Argentinean scorpion).